We begin with the raw amino-acid sequence, 336 residues long: Nuclear envelope-associated protein 1 (336 aa).

Residues 125–261 (CSMLKQQLDD…RRTDQDLKKK (137 aa)) are a coiled coil. The short motif at 240 to 261 (KTKELESQLEKQRRTDQDLKKK) is the Bipartite nuclear localization signal element. Residues 313 to 330 (FWDNSGFKIVVSMSMLML) form a helical membrane-spanning segment.

In terms of assembly, forms heteromers with NEAP2 and NEAP3. Interacts with SUN1; SUN2 and bZIP18.

Its subcellular location is the nucleus inner membrane. The protein localises to the nucleus. It is found in the nucleoplasm. The chain is Nuclear envelope-associated protein 1 from Arabidopsis thaliana (Mouse-ear cress).